A 262-amino-acid polypeptide reads, in one-letter code: ATP synthase subunit a (262 aa).

5 consecutive transmembrane segments (helical) span residues 26–46 (VHIDTLFFSILAAVIFLFVFS), 86–106 (VAPLALTIFCWVFIMNAIDLI), 130–150 (DISATLGMSICVFFLILFYTI), 204–226 (LIFILIAVMYSANMAIAALGIPL), and 240–260 (LQAFIFMMLTVVYLSIAYNKA).

It belongs to the ATPase A chain family. As to quaternary structure, F-type ATPases have 2 components, CF(1) - the catalytic core - and CF(0) - the membrane proton channel. CF(1) has five subunits: alpha(3), beta(3), gamma(1), delta(1), epsilon(1). CF(0) has three main subunits: a(1), b(2) and c(9-12). The alpha and beta chains form an alternating ring which encloses part of the gamma chain. CF(1) is attached to CF(0) by a central stalk formed by the gamma and epsilon chains, while a peripheral stalk is formed by the delta and b chains.

The protein resides in the cell inner membrane. Its function is as follows. Key component of the proton channel; it plays a direct role in the translocation of protons across the membrane. The protein is ATP synthase subunit a of Haemophilus influenzae (strain PittEE).